The sequence spans 120 residues: Protein FAM241B (120 aa).

The interval 12–59 is disordered; sequence QDDDPRVRTTTQHRSSSSQQGFFNRGHGAPPGGPGPRQQQAGARLGAA. Low complexity-rich tracts occupy residues 19-39 and 47-59; these read RTTT…RGHG and PRQQ…LGAA. S61 carries the post-translational modification Phosphoserine. The helical transmembrane segment at 91–111 threads the bilayer; that stretch reads ILLLFLLMMLGVRGLLLVGLV.

It belongs to the FAM241 family.

It is found in the membrane. Its function is as follows. May play a role in lysosome homeostasis. This chain is Protein FAM241B, found in Mus musculus (Mouse).